The sequence spans 146 residues: Large ribosomal subunit protein uL16 (146 aa).

Belongs to the universal ribosomal protein uL16 family. Part of the 50S ribosomal subunit.

Functionally, binds 23S rRNA and is also seen to make contacts with the A and possibly P site tRNAs. This chain is Large ribosomal subunit protein uL16, found in Caulobacter sp. (strain K31).